We begin with the raw amino-acid sequence, 245 residues long: Probable phosphatase YcdX (245 aa).

9 residues coordinate Zn(2+): H7, H9, H15, H40, E73, H101, H131, D192, and H194.

It belongs to the PHP family. In terms of assembly, homotrimer. Zn(2+) serves as cofactor.

The polypeptide is Probable phosphatase YcdX (Escherichia coli O127:H6 (strain E2348/69 / EPEC)).